Reading from the N-terminus, the 708-residue chain is Glycine--tRNA ligase beta subunit (708 aa).

It belongs to the class-II aminoacyl-tRNA synthetase family. Tetramer of two alpha and two beta subunits.

The protein resides in the cytoplasm. It catalyses the reaction tRNA(Gly) + glycine + ATP = glycyl-tRNA(Gly) + AMP + diphosphate. In Paracidovorax citrulli (strain AAC00-1) (Acidovorax citrulli), this protein is Glycine--tRNA ligase beta subunit.